The following is a 332-amino-acid chain: Ketol-acid reductoisomerase (NAD(+)) (332 aa).

The KARI N-terminal Rossmann domain occupies 1 to 186 (MEILHDEDVD…HWTKAGILEC (186 aa)). NAD(+) is bound by residues 24–27 (YGAQ), glutamate 46, asparagine 55, serine 57, and 87–90 (DEVQ). Residue histidine 112 is part of the active site. Residue glycine 138 coordinates NAD(+). Residues 187–332 (TFEQETYEDL…AEIRKLFAQK (146 aa)) form the KARI C-terminal knotted domain. Residues aspartate 195, glutamate 199, glutamate 231, and glutamate 235 each coordinate Mg(2+). Serine 256 lines the substrate pocket.

This sequence belongs to the ketol-acid reductoisomerase family. Homodimer. Mg(2+) serves as cofactor.

It catalyses the reaction (2R)-2,3-dihydroxy-3-methylbutanoate + NAD(+) = (2S)-2-acetolactate + NADH + H(+). The protein operates within amino-acid biosynthesis; L-isoleucine biosynthesis; L-isoleucine from 2-oxobutanoate: step 2/4. Its pathway is amino-acid biosynthesis; L-valine biosynthesis; L-valine from pyruvate: step 2/4. Its function is as follows. Involved in the biosynthesis of branched-chain amino acids (BCAA). Catalyzes an alkyl-migration followed by a ketol-acid reduction of (S)-2-acetolactate (S2AL) to yield (R)-2,3-dihydroxy-isovalerate. In the isomerase reaction, S2AL is rearranged via a Mg-dependent methyl migration to produce 3-hydroxy-3-methyl-2-ketobutyrate (HMKB). In the reductase reaction, this 2-ketoacid undergoes a metal-dependent reduction by NADH to yield (R)-2,3-dihydroxy-isovalerate. This Uncultured archaeon GZfos26G2 protein is Ketol-acid reductoisomerase (NAD(+)).